A 344-amino-acid polypeptide reads, in one-letter code: Beta-1,4-galactosyltransferase 4 (344 aa).

Over 1–12 (MGCNPPYLLPYR) the chain is Cytoplasmic. The helical; Signal-anchor for type II membrane protein transmembrane segment at 13–38 (LRLLLFFTLCLTVVGWVTSNYFVDPI) threads the bilayer. The Lumenal segment spans residues 39-344 (QVIPKAKVFM…NITVDFWTGV (306 aa)). Cys77 and Cys118 are joined by a disulfide. UDP-alpha-D-galactose contacts are provided by residues 129 to 133 (PHRNR), 168 to 170 (FNR), and 195 to 196 (VD). Cys189 and Cys208 are disulfide-bonded. Asp196 provides a ligand contact to Mn(2+). Asn220 carries an N-linked (GlcNAc...) asparagine glycan. The UDP-alpha-D-galactose site is built by Tyr224 and Trp256. N-acetyl-D-glucosamine is bound at residue 258–261 (GEDD). Mn(2+) is bound at residue His289. 289–291 (HTR) is a UDP-alpha-D-galactose binding site. Residue Arg301 coordinates N-acetyl-D-glucosamine. Residue Asn335 is glycosylated (N-linked (GlcNAc...) asparagine).

This sequence belongs to the glycosyltransferase 7 family. The cofactor is Mn(2+).

It localises to the golgi apparatus. It is found in the golgi stack membrane. The catalysed reaction is N-acetyl-D-glucosamine + UDP-alpha-D-galactose = beta-D-galactosyl-(1-&gt;4)-N-acetyl-D-glucosamine + UDP + H(+). The enzyme catalyses a beta-D-GlcNAc-(1-&gt;3)-beta-D-Gal-(1-&gt;4)-beta-D-Glc-(1&lt;-&gt;1)-Cer(d18:1(4E)) + UDP-alpha-D-galactose = a neolactoside nLc4Cer(d18:1(4E)) + UDP + H(+). Its pathway is protein modification; protein glycosylation. In terms of biological role, galactose (Gal) transferase involved in the biosynthesis of glycoproteins, proteoglycans, and glycosyphingolipids. Catalyzes the transfer of Gal residue via a beta1-&gt;4 linkage from UDP-Gal to the non-reducing terminal N-acetyl glucosamine 6-O-sulfate (6-O-sulfoGlcNAc) in the linearly growing chain of both N- and O-linked keratan sulfate proteoglycans. Cooperates with B3GNT7 N-acetyl glucosamine transferase and CHST6 and CHST1 sulfotransferases to construct and elongate mono- and disulfated disaccharide units [-&gt;3Galbeta1-&gt;4(6-sulfoGlcNAcbeta)1-&gt;] and [-&gt;3(6-sulfoGalbeta)1-&gt;4(6-sulfoGlcNAcbeta)1-&gt;] within keratan sulfate polymer. This chain is Beta-1,4-galactosyltransferase 4 (B4GALT4), found in Cricetulus griseus (Chinese hamster).